The primary structure comprises 102 residues: Small ribosomal subunit protein uS10 (102 aa).

Belongs to the universal ribosomal protein uS10 family. In terms of assembly, part of the 30S ribosomal subunit.

Functionally, involved in the binding of tRNA to the ribosomes. The sequence is that of Small ribosomal subunit protein uS10 from Xanthobacter autotrophicus (strain ATCC BAA-1158 / Py2).